The chain runs to 517 residues: DNA-(apurinic or apyrimidinic site) endonuclease 2 (517 aa).

Asn9 and Glu34 together coordinate Mg(2+). The Claspin-like CKB motif signature appears at 82-90 (EEGLSGVFC). Tyr142 is a catalytic residue. 4 residues coordinate Mg(2+): Asp183, Asn185, Asp299, and His300. Residue Asp183 is the Proton donor/acceptor of the active site. His300 (proton acceptor) is an active-site residue. Over residues 347–362 (GNTTEESSELTGTPSF) the composition is skewed to polar residues. Positions 347-366 (GNTTEESSELTGTPSFTEGA) are disordered. The PCNA interacting protein (PIP) box motif lies at 395–402 (QGNLLSFF). Zn(2+)-binding residues include Cys463, His466, Cys489, and Cys503. A GRF-type zinc finger spans residues 463–512 (CKGHSEPCVLRTVKKAGPNCGRQFYVCARPEGHSSNPQARCNFFLWLTKK).

The protein belongs to the DNA repair enzymes AP/ExoA family. As to quaternary structure, interacts (via PIP box and GRF-type Zinc finger domain) with pcna; the interaction is required for 3 -5 SSB end resection, assembly of a checkpoint protein complex to SSB sites, and SSB signaling. Interacts with chek1. Mg(2+) is required as a cofactor. The cofactor is Mn(2+). In terms of tissue distribution, expressed in eggs (at protein level).

The protein resides in the nucleus. Its subcellular location is the chromosome. It is found in the cytoplasm. It localises to the mitochondrion. It catalyses the reaction Exonucleolytic cleavage in the 3'- to 5'-direction to yield nucleoside 5'-phosphates.. With respect to regulation, 3'-5' nuclease activity is stimulated in presence of pcna. In terms of biological role, functions as a weak apurinic/apyrimidinic (AP) endodeoxyribonuclease in the DNA base excision repair (BER) pathway of DNA lesions induced by oxidative and alkylating agents. Initiates repair of AP sites in DNA by catalyzing hydrolytic incision of the phosphodiester backbone immediately adjacent to the damage, generating a single-strand break with 5'-deoxyribose phosphate and 3'-hydroxyl ends. Exhibits 3'-5' exonuclease activity on a 3' DNA substrate; nuclease activity is stimulated by interaction with pcna. Has a preference for the 3' recessed ends over blunt-ended substrates, in both the presence and the absence of pcna. Generates single-stranded DNA (ssDNA) via 3'-5' single-strand break (SSB) end resection, thereby promoting a DNA damage response via replication protein A (rpa2)-binding to ssDNA and the recruitment of a checkpoint protein complex, including atr, atr-interacting protein atrip, and rad9, to damage sites following oxidative stress. Plays a role in reversing blocked 3' DNA ends, problematic lesions that preclude DNA synthesis. Required for chek1 phosphorylation induced by hydrogen peroxide but not by stalled replication forks. This chain is DNA-(apurinic or apyrimidinic site) endonuclease 2, found in Xenopus laevis (African clawed frog).